The following is a 613-amino-acid chain: Spastin (613 aa).

A disordered region spans residues 1–42 (MNSPGGRGKKKGSAGSSSAPPAAGASPSAPSGPAPPAPPAGA). Topologically, residues 1-61 (MNSPGGRGKK…KRNLYYFSYP (61 aa)) are cytoplasmic. Residues 13-29 (SAGSSSAPPAAGASPSA) show a composition bias toward low complexity. Residues 30–39 (PSGPAPPAPP) are compositionally biased toward pro residues. Residues 62 to 82 (LFAAFALLRFVAFQLGLLVAW) constitute an intramembrane region (helical). At 83–613 (LCERLSRGAL…WNKDFGDTTV (531 aa)) the chain is on the cytoplasmic side. An MIT domain is found at 117–192 (HKRAFECISM…AMAKDRLQLL (76 aa)). The segment at 224–312 (SESGAVPKKK…PAARKKKDTK (89 aa)) is disordered. 3 stretches are compositionally biased toward polar residues: residues 237-257 (THTS…STGL), 264-274 (PSYSGISTASV), and 281-299 (PATS…NKPS). 379–386 (GPPGNGKT) is a binding site for ATP.

The protein belongs to the AAA ATPase family. Spastin subfamily. In terms of assembly, homohexamer. The homohexamer is stabilized by ATP-binding. The homohexamer may adopt a ring conformation through which microtubules pass prior to being severed. Interacts with microtubules.

It localises to the membrane. The protein localises to the cytoplasm. It is found in the cytoskeleton. Its subcellular location is the microtubule organizing center. The protein resides in the centrosome. It localises to the perinuclear region. The protein localises to the nucleus. It carries out the reaction n ATP + n H2O + a microtubule = n ADP + n phosphate + (n+1) alpha/beta tubulin heterodimers.. In terms of biological role, ATP-dependent microtubule severing protein that specifically recognizes and cuts microtubules that are polyglutamylated. Preferentially recognizes and acts on microtubules decorated with short polyglutamate tails: severing activity increases as the number of glutamates per tubulin rises from one to eight, but decreases beyond this glutamylation threshold. Microtubule severing promotes reorganization of cellular microtubule arrays and the release of microtubules from the centrosome following nucleation. Required for membrane traffic from the endoplasmic reticulum (ER) to the Golgi and for completion of the abscission stage of cytokinesis. Also plays a role in axon growth and the formation of axonal branches. This chain is Spastin, found in Gallus gallus (Chicken).